The chain runs to 490 residues: MTMKGGVASQDFSAAIATACEPAANVWSKVCVALKRELGDAAFGSWIAPAMLREAATGDVVLVTSTGIARDWIRRSAWRRIGELWAAHDATGRRIDLKSRLEFEAAAGAYVEATPKAVAAEPIEIVLPVSTDAPTVVAPSAKSPRTQGLQERFTFETFVPGPANEFAHAVARRIANWADGHFNPVLFHGPYGFGKTHLLNALAWEAMRNAPEKRVVYLTAERFLSTFVRAVMDRQTAAFKEELRAADLLIIDDVHFIAGKQSTQEELFHTLTALVGEGGRVVFSADRPPSAMTEMDAHLRSHLSAGLVCGLEPADRNLRLGILERKIQTLGAAHGFEPSIRPEVMQFLADRFTDSVRELEGALNTLSARAGEGLSRMTLDEVQAILRPHLRSGEKRITIDDIQKATAEHYGMKQADLLSERRNRAVARPRQAAMWLAKQLTTRSLPDIGRRFGGRDHTTVLHAVRRIEALRAEDSALSHDLETLTRKLRG.

Residues 1–91 (MTMKGGVASQ…GELWAAHDAT (91 aa)) form a domain I, interacts with DnaA modulators region. Residues 91–147 (TGRRIDLKSRLEFEAAAGAYVEATPKAVAAEPIEIVLPVSTDAPTVVAPSAKSPRTQ) are domain II. Positions 148 to 370 (GLQERFTFET…GALNTLSARA (223 aa)) are domain III, AAA+ region. Residues G192, G194, K195, and T196 each coordinate ATP. The domain IV, binds dsDNA stretch occupies residues 371–490 (GEGLSRMTLD…LETLTRKLRG (120 aa)).

This sequence belongs to the DnaA family. In terms of assembly, oligomerizes as a right-handed, spiral filament on DNA at oriC.

The protein localises to the cytoplasm. Functionally, plays an essential role in the initiation and regulation of chromosomal replication. ATP-DnaA binds to the origin of replication (oriC) to initiate formation of the DNA replication initiation complex once per cell cycle. Binds the DnaA box (a 9 base pair repeat at the origin) and separates the double-stranded (ds)DNA. Forms a right-handed helical filament on oriC DNA; dsDNA binds to the exterior of the filament while single-stranded (ss)DNA is stabiized in the filament's interior. The ATP-DnaA-oriC complex binds and stabilizes one strand of the AT-rich DNA unwinding element (DUE), permitting loading of DNA polymerase. After initiation quickly degrades to an ADP-DnaA complex that is not apt for DNA replication. Binds acidic phospholipids. This Caulobacter vibrioides (strain ATCC 19089 / CIP 103742 / CB 15) (Caulobacter crescentus) protein is Chromosomal replication initiator protein DnaA.